Reading from the N-terminus, the 830-residue chain is Histone acetyltransferase KAT2A (830 aa).

The interval 1–94 (MAEPSQAPNP…RKAQVRGLPR (94 aa)) is disordered. Ala-2 carries the post-translational modification N-acetylalanine. Composition is skewed to pro residues over residues 7–33 (APNPVPAAQPRPLHSPAPAPTSTPAPS) and 41–51 (APTPAPAPAPA). Positions 58–69 (TGSGGAGVGSGG) are enriched in gly residues. The span at 83-94 (SQRKAQVRGLPR) shows a compositional bias: basic residues. Ser-302 carries the phosphoserine modification. Positions 398–417 (SFSPSMGGGSNSSLSLDSAG) are enriched in low complexity. The tract at residues 398 to 426 (SFSPSMGGGSNSSLSLDSAGTEPMPAGEK) is disordered. Residues 496–649 (VIGNSLTPKA…GATLMECELN (154 aa)) form the N-acetyltransferase domain. Position 542 is an N6-acetyllysine (Lys-542). The active-site Proton donor/acceptor is the Glu-568. Residues 572-574 (CAV), 579-585 (QVKGYGT), and Tyr-610 contribute to the acetyl-CoA site. Residues 572–574 (CAV), 579–585 (QVKGYGT), and Tyr-610 contribute to the succinyl-CoA site. Lys-721 is covalently cross-linked (Glycyl lysine isopeptide (Lys-Gly) (interchain with G-Cter in SUMO2)). A Bromo domain is found at 721–825 (KDPDQLYTTL…KFFYFKLKEG (105 aa)). Thr-728 is subject to Phosphothreonine. Glycyl lysine isopeptide (Lys-Gly) (interchain with G-Cter in SUMO2) cross-links involve residues Lys-752 and Lys-784.

It belongs to the acetyltransferase family. GCN5 subfamily. As to quaternary structure, interacts with EP300, CREBBP and ADA2. Component of the TFTC-HAT complex, at least composed of TAF5L, TAF6L, TAF3, TADA3L, SUPT3H/SPT3, TAF2/TAFII150, TAF4/TAFII135, TAF5/TAFII100, KAT2A/GCN5L2, TAF10 and TRRAP. Component of the STAGA transcription coactivator-HAT complex, at least composed of SUPT3H, KAT2A, SUPT7L, TAF5L, TAF6L, TADA3L, TAD1L, TAF10, TAF12, TRRAP and TAF9. The STAGA core complex is associated with a subcomplex required for histone deubiquitination composed of ATXN7L3, ENY2 and USP22. Component of the ADA2A-containing complex (ATAC), composed of KAT14, KAT2A, TADA2L, TADA3L, ZZ3, MBIP, WDR5, YEATS2, CCDC101 and DR1. In the complex, it probably interacts directly with KAT14, MBIP and WDR5. Interacts with PML. Interacts with CEBPB. Interacts with TACC1, TACC2 and TACC3. Interacts with RELA. Interacts with NFATC2. Interacts with TBX5. Interacts with PLK4. Associates with the 2-oxoglutarate dehydrogenase complex. Interacts with XPC; leading to KAT2A recruitment to promoters and subsequent acetylation of histones. Interacts with ERCC3/XPB; leading to KAT2A recruitment to promoters and subsequent acetylation of histones. Interacts with ISL1. Interactions of ISL1 with MLIP1 or KAT2A may be mutually exclusive. Acetylated at Lys-542, inhibiting the protein acetyltransferase activity. Deacetylation at Lys-542 by SIRT6 promotes phosphorylation at Ser-302 and Thr-728 and subsequent activation of the protein acetyltransferase activity, leading to acetylation and inactivation of PPARGC1A. In brain, highly expressed in the hippocampal CA1 region (at protein level). Also expressed in the hippocampal subregions CA3 and the dentate gyrus as well as in the cortex and prefrontal cortex. Expressed at low level in the cerebellum.

It localises to the nucleus. The protein resides in the chromosome. The protein localises to the cytoplasm. Its subcellular location is the cytoskeleton. It is found in the microtubule organizing center. It localises to the centrosome. The catalysed reaction is L-lysyl-[histone] + acetyl-CoA = N(6)-acetyl-L-lysyl-[histone] + CoA + H(+). It carries out the reaction L-lysyl-[protein] + acetyl-CoA = N(6)-acetyl-L-lysyl-[protein] + CoA + H(+). The enzyme catalyses succinyl-CoA + L-lysyl-[protein] = N(6)-succinyl-L-lysyl-[protein] + CoA + H(+). It catalyses the reaction glutaryl-CoA + L-lysyl-[protein] = N(6)-glutaryl-L-lysyl-[protein] + CoA + H(+). Its function is as follows. Protein lysine acyltransferase that can act as a acetyltransferase, glutaryltransferase, succinyltransferase or malonyltransferase, depending on the context. Acts as a histone lysine succinyltransferase: catalyzes succinylation of histone H3 on 'Lys-79' (H3K79succ), with a maximum frequency around the transcription start sites of genes. Succinylation of histones gives a specific tag for epigenetic transcription activation. Association with the 2-oxoglutarate dehydrogenase complex, which provides succinyl-CoA, is required for histone succinylation. In different complexes, functions either as an acetyltransferase (HAT) or as a succinyltransferase: in the SAGA and ATAC complexes, acts as a histone acetyltransferase. Has significant histone acetyltransferase activity with core histones, but not with nucleosome core particles. Has a a strong preference for acetylation of H3 at 'Lys-9' (H3K9ac). Acetylation of histones gives a specific tag for epigenetic transcription activation. Recruited by the XPC complex at promoters, where it specifically mediates acetylation of histone variant H2A.Z.1/H2A.Z, thereby promoting expression of target genes. Involved in long-term memory consolidation and synaptic plasticity: acts by promoting expression of a hippocampal gene expression network linked to neuroactive receptor signaling. Acts as a positive regulator of T-cell activation: upon TCR stimulation, recruited to the IL2 promoter following interaction with NFATC2 and catalyzes acetylation of histone H3 at 'Lys-9' (H3K9ac), leading to promote IL2 expression. Required for growth and differentiation of craniofacial cartilage and bone by regulating acetylation of histone H3 at 'Lys-9' (H3K9ac). Regulates embryonic stem cell (ESC) pluripotency and differentiation. Also acetylates non-histone proteins, such as CEBPB, MRE11, PPARGC1A, PLK4 and TBX5. Involved in heart and limb development by mediating acetylation of TBX5, acetylation regulating nucleocytoplasmic shuttling of TBX5. Acts as a negative regulator of centrosome amplification by mediating acetylation of PLK4. Acts as a negative regulator of gluconeogenesis by mediating acetylation and subsequent inactivation of PPARGC1A. Also acts as a histone glutaryltransferase: catalyzes glutarylation of histone H4 on 'Lys-91' (H4K91glu), a mark that destabilizes nucleosomes by promoting dissociation of the H2A-H2B dimers from nucleosomes. The sequence is that of Histone acetyltransferase KAT2A from Mus musculus (Mouse).